Here is a 385-residue protein sequence, read N- to C-terminus: Putative cell agglutination protein pfl8 (385 aa).

An N-terminal signal peptide occupies residues 1 to 20 (MNSYISLIFTLLFFTSAARS). The interval 41-90 (SSEFTSTITPETPSSSSSTFVPISTHTSSATNTTSGQLSISSSSSTSSEY) is disordered. N-linked (GlcNAc...) asparagine glycosylation is found at asparagine 72, asparagine 270, and asparagine 346. Residues 196–360 (EVSTFNKPAY…GPVRTTSYSY (165 aa)) form the PA14 domain.

The protein resides in the secreted. Its subcellular location is the cell surface. May be involved in agglutination during conjugation or other aspects of colony formation. Induces flocculation when overexpressed. The sequence is that of Putative cell agglutination protein pfl8 from Schizosaccharomyces pombe (strain 972 / ATCC 24843) (Fission yeast).